Here is a 381-residue protein sequence, read N- to C-terminus: Protein-glutamate methylesterase/protein-glutamine glutaminase 1 (381 aa).

The Response regulatory domain occupies 14–132; that stretch reads RVMLVDDSAV…DLAGGVDFKS (119 aa). Asp65 carries the 4-aspartylphosphate modification. Residues 143 to 173 are disordered; it reads QARRAGARPARPGGPPATRPVIASTSPRTPV. Positions 144–153 are enriched in low complexity; the sequence is ARRAGARPAR. One can recognise a CheB-type methylesterase domain in the interval 188-381; the sequence is PEPPDIIAIG…PWIMKLAARR (194 aa). Residues Ser199, His227, and Asp323 contribute to the active site.

This sequence belongs to the CheB family. In terms of processing, phosphorylated by CheA. Phosphorylation of the N-terminal regulatory domain activates the methylesterase activity.

The protein resides in the cytoplasm. The enzyme catalyses [protein]-L-glutamate 5-O-methyl ester + H2O = L-glutamyl-[protein] + methanol + H(+). It carries out the reaction L-glutaminyl-[protein] + H2O = L-glutamyl-[protein] + NH4(+). Functionally, involved in chemotaxis. Part of a chemotaxis signal transduction system that modulates chemotaxis in response to various stimuli. Catalyzes the demethylation of specific methylglutamate residues introduced into the chemoreceptors (methyl-accepting chemotaxis proteins or MCP) by CheR. Also mediates the irreversible deamidation of specific glutamine residues to glutamic acid. The polypeptide is Protein-glutamate methylesterase/protein-glutamine glutaminase 1 (Paramagnetospirillum magneticum (strain ATCC 700264 / AMB-1) (Magnetospirillum magneticum)).